A 534-amino-acid chain; its full sequence is MAAGSGSAAAVAAVAGGGPAGPHAAGVTAGAVTTGSGAPVPGPGAVLIGDRLYSGVLITLENCLLPEHTLRFTPSMSSGLDPDTETELRVTGCELIQAAGILLRLPQVAMATGQVLFQRFFYTKSFVKHSMEHVSMACVHLASKIEEAPRRIRDVINVFHRLRHLREKKKPVPLILDQEYVNLKNQIIKAERRVLKELGFCVHVKHPHKIIVMYLQVLECERNQHLVQTSWNYMNDSLRTDVFVRFQPESIACACIYLAARTLEIPLPNRPHWFLLFGTTEEEIQEICLKILQLYTRKKVDLSDLESKIEKKKLAIEEAKAQAKGLLPEGAPVLDNTSGFSPLPKNESPKEVKGNKPSPLPVQAMKNAKRKAEGAKRTGSNSPVNGVQKGRESRSRSGSRDQSYSRSPSRSASPKHRKSESYSTSSGSKSHSRSRSRSGSPPRQFNHSSTYKSSKMRSYKKSKDYKYSAHKARKSRSRSSSRSRSRSRERSDHSGKYKKKSHYYRNHRHERSRSYERASHRYDRDHPGHSRHRR.

Cyclin-like regions lie at residues 94–196 (ELIQ…RVLK) and 209–293 (KIIV…KILQ). The tract at residues 327-534 (LPEGAPVLDN…DHPGHSRHRR (208 aa)) is disordered. Over residues 389–399 (KGRESRSRSGS) the composition is skewed to basic and acidic residues. 2 stretches are compositionally biased toward low complexity: residues 400–412 (RDQS…SRSA) and 437–453 (RSGS…TYKS). Positions 400–436 (RDQSYSRSPSRSASPKHRKSESYSTSSGSKSHSRSRS) are RS. Residues 468–485 (SAHKARKSRSRSSSRSRS) are compositionally biased toward basic residues. Residues 486 to 495 (RSRERSDHSG) show a composition bias toward basic and acidic residues. The span at 496-511 (KYKKKSHYYRNHRHER) shows a compositional bias: basic residues. A compositionally biased stretch (basic and acidic residues) spans 512–528 (SRSYERASHRYDRDHPG).

Belongs to the cyclin family. Cyclin L subfamily.

Its subcellular location is the nucleus speckle. It is found in the nucleus. It localises to the nucleoplasm. In terms of biological role, involved in pre-mRNA splicing. The protein is Cyclin-L1 (CCNL1) of Gallus gallus (Chicken).